Reading from the N-terminus, the 676-residue chain is MKFDSRVMLNSANNNSPQHPVSAPSDINMNGYNRKLPQKRGYEMPKYSDPKKKMCKERIPQPKNTVAMLNELRHGLIYKLESQTGPVHAPLFTISVEVDGQKYLGQGRSKKVARIEAAATALRSFIQFKDGAVLSPLKPAGNLDFTSDEHLENGIENLSSSKMFEIIQTMLTEKLSNPTSLEQPTFCMSQNVSKSAITVDGQKKVPDKGPVMLLYELFNDVNFECINIDGAQNNCRFKMTVTINEKKFDGTGPSKKTAKNAAAKAALASLCNISYSPMVVPQKNVPLPIDDKSSSMELPQIHADTIGRLVLEKFMEVIKGQEAYSRRKVLAGIVMTENMNFCEAKVISVSTGTKCVSGEHMSVNGAVLNDSHAEIVSRRCLLKYLYAQLDLQCNQATAYQSIFVRNTDGQYPYKLKSGVHFHLYINTAPCGDARIFSPHENDTGVDKHPNRKARGQLRTKIESGEGTIPVKSSDGIQTWDGVLQGQRLLTMSCSDKIARWNIVGIQGSLLSSIIEPVYLHSIVLGSLLHPEHMYRAVCGRIEKSIQGLPPPYHLNKPRLALVTSAEPRNQAKAPNFGINWTIGDTELEVVNSLTGRTIGGQVSRITKQAFFVKYGFLMANLPGILVRKVTTDYGQTKANVKDYQIAKLELFSAFKREDLGSWLKKPIEQDEFGLAE.

The segment at Met-1–Lys-51 is disordered. Positions Met-8–Gly-31 are enriched in polar residues. Over residues Arg-40–Lys-51 the composition is skewed to basic and acidic residues. DRBM domains lie at Gln-61–Gln-127 and Ile-197–Asn-272. In terms of domain architecture, A to I editase spans Ser-348–Phe-672. His-372 provides a ligand contact to Zn(2+). The Proton donor role is filled by Glu-374. Zn(2+) is bound by residues Cys-430 and Cys-493.

As to expression, expressed in embryonic nervous system; late stage 13 sees ventral nerve cord expression which spreads to brain by stage 16. Expression is maintained through to adulthood.

Functionally, has A-to-I RNA editing activity on extended dsRNA: edits RNA-binding protein Rnp4F. A-to-I editing of pre-mRNAs acts predominantly through nervous system targets to affect adult nervous system integrity, function and behavior. Essential for adaptation to environmental stresses, such as oxygen deprivation, and for the prevention of premature neuronal degeneration, through the editing of ion channels as targets. The chain is Double-stranded RNA-specific editase Adar from Drosophila melanogaster (Fruit fly).